Here is a 478-residue protein sequence, read N- to C-terminus: Zinc metalloproteinase/disintegrin (478 aa).

An N-terminal signal peptide occupies residues 1–20 (MIQVLLVTICLAAFPYQGSS). Residues 21-188 (IILESGNVND…PIKKVSQLNL (168 aa)) constitute a propeptide that is removed on maturation. The region spanning 194–391 (RHVDIVVVVD…QNPQCILNKP (198 aa)) is the Peptidase M12B domain. A disulfide bond links C207 and C248. N-linked (GlcNAc...) (complex) asparagine glycosylation occurs at N279. Cystine bridges form between C305–C386, C345–C370, and C347–C353. H330 contributes to the Zn(2+) binding site. E331 is an active-site residue. Positions 334 and 340 each coordinate Zn(2+). The N-linked (GlcNAc...) (complex) asparagine glycan is linked to N369. Positions 392 to 407 (LRTVSIPVSGNEHLEA) are excised as a propeptide. The Disintegrin domain maps to 397 to 478 (IPVSGNEHLE…ADCPRYHSHA (82 aa)). Disulfide bonds link C411/C426, C413/C421, C420/C443, C434/C440, C439/C464, and C452/C471. Residues 456 to 458 (RGD) carry the Cell attachment site motif. A propeptide spanning residues 476–478 (SHA) is cleaved from the precursor.

It belongs to the venom metalloproteinase (M12B) family. P-II subfamily. P-IIa sub-subfamily. Monomeric (disintegrin). The cofactor is Zn(2+). In terms of processing, glycans are composed of 4 GlcNAc, 3 Man, 2 Gal, 2 NeuAC and 1 Fuc residue. As to expression, expressed by the venom gland.

The protein resides in the secreted. Functionally, impairs hemostasis in the envenomed animal. Inhibits platelet aggregation induced by ADP, thrombin, platelet-activating factor and collagen. Acts by inhibiting fibrinogen interaction with platelet receptors alpha-IIb/beta-3 (ITGA2B/ITGB3). The sequence is that of Zinc metalloproteinase/disintegrin from Calloselasma rhodostoma (Malayan pit viper).